A 148-amino-acid chain; its full sequence is Coactosin (148 aa).

Residues 1-134 (MSGFDLSEVA…VEDEIAAKIK (134 aa)) form the ADF-H domain. The F-loop; important for stable binding to G-actin and F-actin signature appears at 71–76 (DEESKR). Position 147 is a phosphoserine (Ser-147).

Belongs to the actin-binding proteins ADF family. Coactosin subfamily. In terms of assembly, interacts with 14-3-3 protein 3. In terms of processing, phosphorylation at Ser-147 appears not to affect its binding to actin; however, it may regulate phagocytosis and motility.

It is found in the cytoplasm. The protein localises to the cell projection. The protein resides in the phagocytic cup. It localises to the pseudopodium. Its subcellular location is the cell membrane. It is found in the cytoskeleton. Functionally, actin-binding protein which is involved in F-actin stabilization. May play a role during phagocytosis and pseudopod formation by contributing to the maintenance of F-actin. The chain is Coactosin from Entamoeba histolytica (strain ATCC 30459 / HM-1:IMSS / ABRM).